The chain runs to 322 residues: CXXC-type zinc finger protein 5 (322 aa).

Residues 1 to 10 (MSSLGGGSQD) are compositionally biased toward gly residues. Residues 1 to 100 (MSSLGGGSQD…SGGGSMMGGE (100 aa)) form a disordered region. Composition is skewed to low complexity over residues 11 to 20 (AGGSSSSSTN) and 28 to 52 (SGPK…VADD). At threonine 53 the chain carries Phosphothreonine. The segment covering 87 to 97 (SSGGSGGGSMM) has biased composition (gly residues). Residues 256-297 (GKKKRKRCGMCAPCRRRINCEQCSSCRNRKTGHQICKFRKCE) form a CXXC-type zinc finger. A Nuclear localization signal motif is present at residues 257–262 (KKKRKR). Zn(2+) is bound by residues cysteine 263, cysteine 266, cysteine 269, cysteine 275, cysteine 278, cysteine 281, cysteine 291, and cysteine 296.

In terms of assembly, interacts with DVL1. Interacts with RBPJ.

It localises to the nucleus. The protein localises to the cytoplasm. In terms of biological role, may indirectly participate in activation of the NF-kappa-B and MAPK pathways. Acts as a mediator of BMP4-mediated modulation of canonical Wnt signaling activity in neural stem cells. Required for DNA damage-induced ATM phosphorylation, p53 activation and cell cycle arrest. Involved in myelopoiesis. Transcription factor. Binds to the oxygen responsive element of COX4I2 and represses its transcription under hypoxia conditions (4% oxygen), as well as normoxia conditions (20% oxygen). May repress COX4I2 transactivation induced by CHCHD2 and RBPJ. Binds preferentially to DNA containing cytidine-phosphate-guanosine (CpG) dinucleotides over CpH (H=A, T, and C), hemimethylated-CpG and hemimethylated-hydroxymethyl-CpG. The polypeptide is CXXC-type zinc finger protein 5 (CXXC5) (Homo sapiens (Human)).